Consider the following 309-residue polypeptide: Homoserine O-succinyltransferase (309 aa).

The Acyl-thioester intermediate role is filled by cysteine 142. Substrate is bound by residues lysine 163 and serine 192. Residue histidine 235 is the Proton acceptor of the active site. The active site involves glutamate 237. Arginine 249 serves as a coordination point for substrate.

It belongs to the MetA family. Homodimer.

Its subcellular location is the cytoplasm. It catalyses the reaction L-homoserine + succinyl-CoA = O-succinyl-L-homoserine + CoA. It functions in the pathway amino-acid biosynthesis; L-methionine biosynthesis via de novo pathway; O-succinyl-L-homoserine from L-homoserine: step 1/1. Transfers a succinyl group from succinyl-CoA to L-homoserine, forming succinyl-L-homoserine. This is Homoserine O-succinyltransferase from Escherichia coli O17:K52:H18 (strain UMN026 / ExPEC).